A 395-amino-acid chain; its full sequence is Imidazolonepropionase (395 aa).

Residues histidine 63 and histidine 65 each coordinate Fe(3+). Positions 63 and 65 each coordinate Zn(2+). 4-imidazolone-5-propanoate-binding residues include arginine 72, tyrosine 135, and histidine 168. Tyrosine 135 lines the N-formimidoyl-L-glutamate pocket. Histidine 233 provides a ligand contact to Fe(3+). Histidine 233 is a binding site for Zn(2+). Glutamine 236 serves as a coordination point for 4-imidazolone-5-propanoate. Residue aspartate 308 coordinates Fe(3+). A Zn(2+)-binding site is contributed by aspartate 308. The N-formimidoyl-L-glutamate site is built by asparagine 310 and glycine 312. Position 313 (threonine 313) interacts with 4-imidazolone-5-propanoate.

It belongs to the metallo-dependent hydrolases superfamily. HutI family. The cofactor is Zn(2+). Requires Fe(3+) as cofactor.

It is found in the cytoplasm. It catalyses the reaction 4-imidazolone-5-propanoate + H2O = N-formimidoyl-L-glutamate. It participates in amino-acid degradation; L-histidine degradation into L-glutamate; N-formimidoyl-L-glutamate from L-histidine: step 3/3. Catalyzes the hydrolytic cleavage of the carbon-nitrogen bond in imidazolone-5-propanoate to yield N-formimidoyl-L-glutamate. It is the third step in the universal histidine degradation pathway. This Cereibacter sphaeroides (strain ATCC 17029 / ATH 2.4.9) (Rhodobacter sphaeroides) protein is Imidazolonepropionase.